A 60-amino-acid chain; its full sequence is Large ribosomal subunit protein uL30 (60 aa).

This sequence belongs to the universal ribosomal protein uL30 family. As to quaternary structure, part of the 50S ribosomal subunit.

This chain is Large ribosomal subunit protein uL30, found in Acidothermus cellulolyticus (strain ATCC 43068 / DSM 8971 / 11B).